Consider the following 125-residue polypeptide: Cu-Zn superoxide dismutase-like protein OPG175 (125 aa).

A disulfide bond links C52 and C102.

The protein belongs to the Cu-Zn superoxide dismutase family.

It localises to the virion. Its subcellular location is the host cytoplasm. In terms of biological role, superoxide dismutase-like protein with no enzymatic activity. The polypeptide is Cu-Zn superoxide dismutase-like protein OPG175 (OPG175) (Vaccinia virus (strain Western Reserve) (VACV)).